A 378-amino-acid polypeptide reads, in one-letter code: 4-hydroxy-3-methylbut-2-en-1-yl diphosphate synthase (flavodoxin) (378 aa).

4 residues coordinate [4Fe-4S] cluster: Cys-268, Cys-271, Cys-303, and Glu-310.

This sequence belongs to the IspG family. [4Fe-4S] cluster is required as a cofactor.

The enzyme catalyses (2E)-4-hydroxy-3-methylbut-2-enyl diphosphate + oxidized [flavodoxin] + H2O + 2 H(+) = 2-C-methyl-D-erythritol 2,4-cyclic diphosphate + reduced [flavodoxin]. Its pathway is isoprenoid biosynthesis; isopentenyl diphosphate biosynthesis via DXP pathway; isopentenyl diphosphate from 1-deoxy-D-xylulose 5-phosphate: step 5/6. In terms of biological role, converts 2C-methyl-D-erythritol 2,4-cyclodiphosphate (ME-2,4cPP) into 1-hydroxy-2-methyl-2-(E)-butenyl 4-diphosphate. The polypeptide is 4-hydroxy-3-methylbut-2-en-1-yl diphosphate synthase (flavodoxin) (Corynebacterium efficiens (strain DSM 44549 / YS-314 / AJ 12310 / JCM 11189 / NBRC 100395)).